The following is a 501-amino-acid chain: Pentatricopeptide repeat-containing protein At4g16470 (501 aa).

PPR repeat units follow at residues 107–141 (EPET…GFAL), 142–172 (NEYL…LKIR), 173–207 (DLIP…RIVP), 208–242 (DQYT…CIKS), 243–273 (NIIV…LSTR), 274–308 (NVIT…GCRP), 309–344 (NPVT…GIEP), and 345–379 (EGQH…EHPP). Residues 380-455 (VWGSLLGACR…DPGYSQIELQ (76 aa)) are type E motif. Positions 456–486 (GEVHRFMKDDTSHRLSEKIYKKVHEMTSFFM) are type E(+) motif.

This sequence belongs to the PPR family. PCMP-E subfamily.

The chain is Pentatricopeptide repeat-containing protein At4g16470 (PCMP-E12) from Arabidopsis thaliana (Mouse-ear cress).